A 144-amino-acid chain; its full sequence is Large ribosomal subunit protein uL15 (144 aa).

Residues 1–50 are disordered; it reads MRLNTLSPAAGAKSAKKRVGRGIGSGLGKTGGRGVKGAGSRSGGGVRAGF. A compositionally biased stretch (gly residues) spans 21 to 50; that stretch reads RGIGSGLGKTGGRGVKGAGSRSGGGVRAGF.

It belongs to the universal ribosomal protein uL15 family. As to quaternary structure, part of the 50S ribosomal subunit.

Functionally, binds to the 23S rRNA. The chain is Large ribosomal subunit protein uL15 from Tolumonas auensis (strain DSM 9187 / NBRC 110442 / TA 4).